Here is a 1093-residue protein sequence, read N- to C-terminus: MGAFSWWRQPSWMADNKRGRMTPSLPWLLSALTLLHLMMHVNGLKRGVQQDLKCTTNNMRVWDCSWPAPLGVSPGTVKDICIKDRPHSCHRLETTNVKIPALSPGDHEVTINYQNGFQSKFTLNEKDVSLVPDTPEILSLSADFSTSTLQLKWNDKGSALPYPSNATWEVKVLQNPRTEPVALVSLNTVLSGKDKGHHWNWTSELPLQCATHSVSIRWHIDYPRFSGYKEWSEWSPLKNISWTRNTETNVFPQDKVVLAGSNMTICCISTTKVLSGQIGNTFRPLIHLYGETVAINILNIPVSENSGSNVIFSTVDDVYGTVVFAGYPPDVPQKLSCETHDLKEIICSWNPGRITGLVGPRNTEYTLFESISGKSAVFHRFEELANETYWLTLKMAPDQEIHNFTLTARNPLGQTESAIVINATERVALHVPISLKVKDVNSTVVTLSWYLPGNFTKINLVCQIEICKANSKKEVRNVTMRGAEDSTYHVAVDKLNPYTIYTFRVRCSSETFWKWSKWSNEKRYLTTEATPSKGPDTWREWSSDGKNLIIYWKPLPINEANGKILSYNVSCSSSEETQSLSEILDPQHKAEIKVNKNDYIISVVARNSAGSSPPSKIASMEIPNDDITVEQAVGIGNRIFLSWQHNPNMTCDYVIKWCNSSWSEPCLLDWIKVPSNSTGTVIESDQFQPGVRYNFYLYGCTNQGYQLLRSTIGYIEELAPIVAPNFTVEDTSADSILVKWDDIPVEELRGFLRGYLFYFQKGERDTPKTRSLETSHSDIKLKNITDISQKTLRIADLQGKTSYHLVLRAYTHGGLGPEKSMFVVTKENSVGLIIAILIPVAVAVIVGVVTSILCYRKREWIKETFYPDIPNPENCKALQFQKSVCEGSNALKTLEMNPCTPNHVEVLESRSIPPKIEDTEITSPVSERPGESSETDPENQAAVSYCPPIIEEEITNPAADEAGGASQVVYIDVQSMYQPQAKAEDEQDTDPVMVAGYKPQMRLPINPTAEDTTAEDEADKTAGYRPQANVNTWNLVSPDSPRSTDSNSEVVSFGSPCSINSRQFLIPPKDEDSPKSNGGGWSFTNFFQNKPND.

The first 43 residues, 1–43, serve as a signal peptide directing secretion; that stretch reads MGAFSWWRQPSWMADNKRGRMTPSLPWLLSALTLLHLMMHVNG. Residues 44 to 829 are Extracellular-facing; the sequence is LKRGVQQDLK…SMFVVTKENS (786 aa). The Fibronectin type-III 1 domain occupies 45-127; sequence KRGVQQDLKC…QSKFTLNEKD (83 aa). 2 disulfides stabilise this stretch: cysteine 54-cysteine 64 and cysteine 81-cysteine 89. N-linked (GlcNAc...) asparagine glycosylation is found at asparagine 165, asparagine 200, asparagine 239, and asparagine 262. 2 disulfides stabilise this stretch: cysteine 209-cysteine 266 and cysteine 337-cysteine 347. Fibronectin type-III domains follow at residues 331-428, 431-530, 534-625, 623-715, and 720-829; these read VPQK…ERVA, VPIS…TEAT, GPDT…IPND, PNDD…IGYI, and PIVA…KENS. N-linked (GlcNAc...) asparagine glycans are attached at residues asparagine 386, asparagine 403, asparagine 422, asparagine 441, asparagine 454, and asparagine 477. Residues cysteine 462 and cysteine 507 are joined by a disulfide bond. The WSXWS motif signature appears at 515–519; that stretch reads WSKWS. 6 N-linked (GlcNAc...) asparagine glycosylation sites follow: asparagine 568, asparagine 648, asparagine 659, asparagine 676, asparagine 725, and asparagine 783. Residues 830–850 form a helical membrane-spanning segment; the sequence is VGLIIAILIPVAVAVIVGVVT. At 851–1093 the chain is on the cytoplasmic side; that stretch reads SILCYRKREW…TNFFQNKPND (243 aa). Positions 865–873 match the Box 1 motif motif; that stretch reads FYPDIPNPE. Disordered regions lie at residues 908-941 and 1003-1093; these read ESRSIPPKIEDTEITSPVSERPGESSETDPENQA and LPIN…KPND. Residues serine 923 and serine 1040 each carry the phosphoserine modification. Composition is skewed to polar residues over residues 1028-1063 and 1082-1093; these read ANVNTWNLVSPDSPRSTDSNSEVVSFGSPCSINSRQ and SFTNFFQNKPND.

Belongs to the type I cytokine receptor family. Type 2 subfamily. As to quaternary structure, heterodimer composed of LIFR and IL6ST. The heterodimer formed by LIFR and IL6ST interacts with the complex formed by CNTF and CNTFR.

It localises to the cell membrane. Its function is as follows. Signal-transducing molecule. May have a common pathway with IL6ST. The soluble form inhibits the biological activity of LIF by blocking its binding to receptors on target cells. This Rattus norvegicus (Rat) protein is Leukemia inhibitory factor receptor (Lifr).